The primary structure comprises 592 residues: Endoribonuclease Arlr (592 aa).

The signal sequence occupies residues 1-24; sequence MRCLALSAVFLCLTLAGHFHLSDA. Positions 83 to 329 are disordered; the sequence is PTAANKPPPL…FQSSGNSVAT (247 aa). Positions 109 to 120 are enriched in polar residues; sequence PGSSPFGASQNP. 2 stretches are compositionally biased toward low complexity: residues 134–144 and 188–209; these read PSHPSQPSQPS and GISSTTSTTTTAKPITSTTGKT. Pro residues-rich tracts occupy residues 234–249 and 258–267; these read LPAPKTPPGSPTPTPG and LPTPQHPVHP. The segment covering 268 to 294 has biased composition (low complexity); that stretch reads PTKATSAATPTPTPTPSFSSSVTPTPA. The region spanning 329–592 is the EndoU domain; the sequence is TDDEIRQLTE…NLIGSAYPEI (264 aa). Active-site residues include His473, His488, and Lys531.

The protein belongs to the ENDOU family. As to quaternary structure, monomer. Requires Mn(2+) as cofactor. As to expression, predominantly expressed in head. Expressed in fat body cells.

Its subcellular location is the endoplasmic reticulum lumen. It is found in the secreted. The catalysed reaction is a ribonucleotidyl-ribonucleotide-RNA + H2O = a 3'-end 3'-phospho-ribonucleotide-RNA + a 5'-end dephospho-ribonucleoside-RNA + H(+). Endoribonuclease that cleaves single-stranded RNAs; unlike its paralog EndoU it does not appear to preferentially cleave at uridylates and releases linear products instead of products that have 2'-3'-cyclic phosphate termini. Preferentially cleaves single stranded RNA at sites with AU, UC and poly-U sites cleaved less efficiently. Targets mRNAs encoding proteins involved in lipid metabolism, particularly those involved in lipolysis, to regulate their expression. This is Endoribonuclease Arlr from Drosophila melanogaster (Fruit fly).